The chain runs to 306 residues: Mitochondrial brown fat uncoupling protein 1 (306 aa).

The Mitochondrial intermembrane segment spans residues 1-10 (MVGTTTTDVP). A helical transmembrane segment spans residues 11 to 32 (PTMGVKIFSAGVAACLADVITF). Solcar repeat units lie at residues 11–102 (PTMG…VQEF), 110–200 (PSLG…MKGA), and 209–294 (DDVP…LKGE). At 33 to 73 (PLDTAKVRQQIQGEFPITSGIRYKGVLGTITTLAKTEGPLK) the chain is on the mitochondrial matrix side. A fatty acid 16:0-binding site is contributed by K56. A helical transmembrane segment spans residues 74–96 (LYSGLPAGLQRQISFASLRIGLY). The Mitochondrial intermembrane segment spans residues 97 to 115 (DTVQEFFTSGEETPSLGSK). A helical membrane pass occupies residues 116–132 (ISAGLTTGGVAVFIGQP). The Mitochondrial matrix portion of the chain corresponds to 133–177 (TEVVKVRLQAQSHLHGLKPRYTGTYNAYRIIATTESLTSLWKGTT). A helical transmembrane segment spans residues 178-194 (PNLLRNVIINCTELVTY). Topologically, residues 195–211 (DLMKGALVRNEILADDV) are mitochondrial intermembrane. The chain crosses the membrane as a helical span at residues 212 to 231 (PCHFVSALIAGFCTTLLSSP). The Mitochondrial matrix portion of the chain corresponds to 232 to 265 (VDVVKTRFINSPPGQYASVPNCAMTMFTKEGPTA). C253 is modified (cysteine sulfenic acid (-SOH)). The helical transmembrane segment at 266–288 (FFKGFVPSFLRLGSWNVIMFVCF) threads the bilayer. Residue K268 participates in fatty acid 16:0 binding. At 289-306 (EKLKGELMRSRQTVDCAT) the chain is on the mitochondrial intermembrane side.

Belongs to the mitochondrial carrier (TC 2.A.29) family. As to quaternary structure, most probably functions as a monomer. Binds one purine nucleotide per monomer. However, has also been suggested to function as a homodimer or a homotetramer. Tightly associates with cardiolipin in the mitochondrion inner membrane; may stabilize and regulate its activity. In terms of processing, may undergo sulfenylation upon cold exposure. May increase the sensitivity of UCP1 thermogenic function to the activation by noradrenaline probably through structural effects. May undergo ubiquitin-mediated proteasomal degradation. In terms of tissue distribution, brown adipose tissue.

Its subcellular location is the mitochondrion inner membrane. It carries out the reaction H(+)(in) = H(+)(out). Has no constitutive proton transporter activity and has to be activated by long-chain fatty acids/LCFAs. Inhibited by purine nucleotides. Both purine nucleotides and LCFAs bind the cytosolic side of the transporter and directly compete to activate or inhibit it. Activated by noradrenaline and reactive oxygen species. Despite lacking canonical translational encoding for selenocysteine, a small pool of the protein has been observed to selectively incorporate selenocysteine at 'Cys-253'. Selenocysteine-modified protein is highly sensitive to redox modification and may constitute a pool of protein highly sensitive to activation by elevated levels of reactive oxygen species (ROS). Mitochondrial protein responsible for thermogenic respiration, a specialized capacity of brown adipose tissue and beige fat that participates in non-shivering adaptive thermogenesis to temperature and diet variations and more generally to the regulation of energy balance. Functions as a long-chain fatty acid/LCFA and proton symporter, simultaneously transporting one LCFA and one proton through the inner mitochondrial membrane. However, LCFAs remaining associated with the transporter via their hydrophobic tails, it results in an apparent transport of protons activated by LCFAs. Thereby, dissipates the mitochondrial proton gradient and converts the energy of substrate oxydation into heat instead of ATP. Regulates the production of reactive oxygen species/ROS by mitochondria. The protein is Mitochondrial brown fat uncoupling protein 1 of Oryctolagus cuniculus (Rabbit).